We begin with the raw amino-acid sequence, 307 residues long: MGASTTARLGPARVRSERRSCAAERHRLVDLYRYERRLARLGLEPVAGVDEAGRGACAGPLVVAAVILGSDRRNRIAGLADSKQLTPAARESIYNEIISRALAWSVVVIPSSEVDELGVHAANITGMRRAVAGLAVRPAYVLTDGFSIAGLNAPGLAVCKGDEAVACIAAASVVAKVTRDRLMVELHEKFPMYEFATHKGYVTAGHRAALARHGPCPEHRRSFVTVRRAGGRMELRITELADSDDSPGFASGPAEAVPGPAGSAGAASAAARPAAAGPAGRLVDQNRAADLRDNGDVSRPAELLEIP.

The RNase H type-2 domain maps to 44–235 (EPVAGVDEAG…VRRAGGRMEL (192 aa)). A divalent metal cation contacts are provided by aspartate 50, glutamate 51, and aspartate 144. The disordered stretch occupies residues 241–307 (ADSDDSPGFA…SRPAELLEIP (67 aa)). A compositionally biased stretch (low complexity) spans 250 to 280 (ASGPAEAVPGPAGSAGAASAAARPAAAGPAG). Over residues 287 to 296 (RAADLRDNGD) the composition is skewed to basic and acidic residues.

Belongs to the RNase HII family. Mn(2+) is required as a cofactor. It depends on Mg(2+) as a cofactor.

Its subcellular location is the cytoplasm. It carries out the reaction Endonucleolytic cleavage to 5'-phosphomonoester.. Endonuclease that specifically degrades the RNA of RNA-DNA hybrids. In Acidothermus cellulolyticus (strain ATCC 43068 / DSM 8971 / 11B), this protein is Ribonuclease HII.